Consider the following 98-residue polypeptide: Integration host factor subunit alpha (98 aa).

The protein belongs to the bacterial histone-like protein family. As to quaternary structure, heterodimer of an alpha and a beta chain.

Its function is as follows. This protein is one of the two subunits of integration host factor, a specific DNA-binding protein that functions in genetic recombination as well as in transcriptional and translational control. This chain is Integration host factor subunit alpha, found in Acinetobacter baumannii (strain AB307-0294).